Reading from the N-terminus, the 248-residue chain is Putative amino-acid ABC transporter-binding protein PatH (248 aa).

Residues 1–21 (MKNWIKVAVAAIALSAATVQA) form the signal peptide.

Belongs to the bacterial solute-binding protein 3 family.

Its subcellular location is the periplasm. Probably part of a binding-protein-dependent transport system for an amino acid. This chain is Putative amino-acid ABC transporter-binding protein PatH (patH), found in Vibrio harveyi (Beneckea harveyi).